The sequence spans 213 residues: Large ribosomal subunit protein bL25 (213 aa).

It belongs to the bacterial ribosomal protein bL25 family. CTC subfamily. Part of the 50S ribosomal subunit; part of the 5S rRNA/L5/L18/L25 subcomplex. Contacts the 5S rRNA. Binds to the 5S rRNA independently of L5 and L18.

Functionally, this is one of the proteins that binds to the 5S RNA in the ribosome where it forms part of the central protuberance. This Mesorhizobium japonicum (strain LMG 29417 / CECT 9101 / MAFF 303099) (Mesorhizobium loti (strain MAFF 303099)) protein is Large ribosomal subunit protein bL25.